The chain runs to 457 residues: CUB1 family protein C30C2.08 (457 aa).

Coiled-coil stretches lie at residues 119–174 and 418–448; these read TQND…NISK and QELV…EERE.

This sequence belongs to the CUB1 family.

Its subcellular location is the cytoplasm. It localises to the nucleus. Functionally, involved in bleomycin tolerance with links to DNA repair and/or proteasome function. This Schizosaccharomyces pombe (strain 972 / ATCC 24843) (Fission yeast) protein is CUB1 family protein C30C2.08.